A 239-amino-acid chain; its full sequence is 1-(5-phosphoribosyl)-5-[(5-phosphoribosylamino)methylideneamino] imidazole-4-carboxamide isomerase (239 aa).

The active-site Proton acceptor is D8. D129 serves as the catalytic Proton donor.

This sequence belongs to the HisA/HisF family.

Its subcellular location is the cytoplasm. It carries out the reaction 1-(5-phospho-beta-D-ribosyl)-5-[(5-phospho-beta-D-ribosylamino)methylideneamino]imidazole-4-carboxamide = 5-[(5-phospho-1-deoxy-D-ribulos-1-ylimino)methylamino]-1-(5-phospho-beta-D-ribosyl)imidazole-4-carboxamide. The protein operates within amino-acid biosynthesis; L-histidine biosynthesis; L-histidine from 5-phospho-alpha-D-ribose 1-diphosphate: step 4/9. The protein is 1-(5-phosphoribosyl)-5-[(5-phosphoribosylamino)methylideneamino] imidazole-4-carboxamide isomerase of Legionella pneumophila (strain Corby).